Consider the following 107-residue polypeptide: U1-lycotoxin-Ls1m (107 aa).

An N-terminal signal peptide occupies residues 1–20 (MMKVLVVVALLVTLISYSSS). The propeptide occupies 21–41 (EGIDDLEADELLSLMANEQTR). 4 disulfides stabilise this stretch: Cys-44–Cys-59, Cys-51–Cys-68, Cys-58–Cys-86, and Cys-70–Cys-84.

This sequence belongs to the neurotoxin 19 (CSTX) family. 04 (U1-Lctx) subfamily. As to expression, expressed by the venom gland.

Its subcellular location is the secreted. In Lycosa singoriensis (Wolf spider), this protein is U1-lycotoxin-Ls1m.